We begin with the raw amino-acid sequence, 252 residues long: H-2 class II histocompatibility antigen, A-F beta chain (252 aa).

A signal peptide spans 1–16; sequence AAVVVLMVLSSPGTEG. A beta-1 region spans residues 17–109; the sequence is GNSERHFVSQ…VETPTSLRRL (93 aa). Residues 17–213 are Extracellular-facing; it reads GNSERHFVSQ…RAQSESARSK (197 aa). 2 disulfides stabilise this stretch: Cys-31-Cys-93 and Cys-132-Cys-188. N-linked (GlcNAc...) asparagine glycosylation occurs at Asn-35. The interval 110-203 is beta-2; it reads EQPNVVISLS…SLKSPITVEW (94 aa). Positions 112-200 constitute an Ig-like C1-type domain; sequence PNVVISLSRT…EHPSLKSPIT (89 aa). Residues 204 to 213 form a connecting peptide region; it reads RAQSESARSK. Residues 214 to 234 form a helical membrane-spanning segment; that stretch reads MLSGIGGCVLGVIFLGLGLFI. Residues 235-252 are Cytoplasmic-facing; it reads RYRSQKGPRGPPPAGLLQ.

This sequence belongs to the MHC class II family. Post-translationally, ubiquitinated in immature dendritic cells leading to down-regulation of MHC class II.

The protein resides in the membrane. The chain is H-2 class II histocompatibility antigen, A-F beta chain (H2-Ab1) from Mus musculus (Mouse).